The chain runs to 137 residues: MVHWTQEERDEISKTFQGTDMKTVVTQALDRMFKVYPWTNRYFQKRTDFRSSIHAGIVVGALQDAVKHMDDVKTLFKDLSKKHADDLHVDPGSFHLLTDCIIVELAYLRKDCFTPHIQGIWDKFFEVVIDAISKQYH.

Residues 3-137 (HWTQEERDEI…VIDAISKQYH (135 aa)) form the Globin domain. Positions 54 and 83 each coordinate heme b.

This sequence belongs to the globin family. In terms of assembly, heterotetramer of two alpha chains and two beta chains. Red blood cells.

In terms of biological role, involved in oxygen transport from gills to the various peripheral tissues. This is Hemoglobin subunit beta (HBB) from Mustelus griseus (Spotless smooth-hound).